The following is a 943-amino-acid chain: MPGVEDPCDSQGTPPEEPSTSVAPGEAAKEQSPRLCGYLAKLSGKGPLRSFKNRWFVLDPRKCQFYYFKHHQDAQPLGQIDIGDASFSYDLEAEEGQFEIHSAGRVSILRAPSRHAMTYWLQELQQKRWEYCNSFGALKRESVINPASTKVPIGLVARESPDYMGIPNINDAERARNQFAVETCPSVLGDQTSAEQASNNPAAVQVLLRQWSNDIRSSMQHLRPGKSSDCRKSTFYTNEEWELLNPTPKELEESLLHVEKRKPPTEGIKGSTGMSFPFDFGRIPQRARRPLREIMGVNKNRTECLADSLPVSDSRMESDVLLKLQSQEEELERLKKDLLSQKELVRLLQQSLRSSQYDKYFASPFCDGLSKEHLHLLQQKDTQIQELNHLLERQTLEKDHLHQEVEELKCSVKELKDQLNMMMETIQAKDEVIMRLSRQLSKYEQHTPSSTVAAEIPVAPQLEELNRLQDSLQGYKAQNTFLNKEILELSALRRNAERREREMEARYSNLEAKMCQIESKYLVLLQEMKTPVCSDDQGTAREFVNQLLEDALKVENAEQPEHTFVKPHTVSKYDIHGFLIVPEDDEEEEKLVAKVRALDLKTLSLTENQEISNVVKWDNYFASTVNREMACSPELKALVRNGIPHEHRSRMWKWFTNLHIKKLKDEAAPGYFQSLLQNALEKQNPASKQIELDLMRTLPNNKHYTSPTSEGIQKLRNVLLAYSWRNPDIGYCQGINRLAAIALLYLDQEDAFWCLVTIVEAFMPRDYYTKTLLGSQVDQRVFKDLMNEKLPRLCAHFEQYKVDYTLITFNWFLVVFVDSVVSDILFRIWDSLLYEGSKVIFRFALGLFKYKEEEILKLQDSMSIFKYLRYFSRTILDARKLCNIAFVDMNPFPLRQIRNRRTYHLEKVRLELSELEAIRADFIRERETNPERRDLISDDEEDS.

The segment at 1–29 (MPGVEDPCDSQGTPPEEPSTSVAPGEAAK) is disordered. Residues 10 to 22 (SQGTPPEEPSTSV) are compositionally biased toward polar residues. In terms of domain architecture, PH spans 32-129 (SPRLCGYLAK…WLQELQQKRW (98 aa)). Residues 315–514 (RMESDVLLKL…ARYSNLEAKM (200 aa)) adopt a coiled-coil conformation. The region spanning 642-836 (GIPHEHRSRM…RIWDSLLYEG (195 aa)) is the Rab-GAP TBC domain.

The protein resides in the early endosome. In terms of biological role, GTPase-activating protein that plays a role in the early steps of endocytosis. The protein is TBC1 domain family member 2B (tbc1d2b) of Xenopus tropicalis (Western clawed frog).